An 81-amino-acid polypeptide reads, in one-letter code: ATP synthase subunit c, chloroplastic (81 aa).

2 helical membrane passes run 7 to 27 and 57 to 77; these read AASVIAAGLAVGLASIGPGIG and LAFMEALTIYGLVVALALLFA.

This sequence belongs to the ATPase C chain family. In terms of assembly, F-type ATPases have 2 components, F(1) - the catalytic core - and F(0) - the membrane proton channel. F(1) has five subunits: alpha(3), beta(3), gamma(1), delta(1), epsilon(1). F(0) has four main subunits: a(1), b(1), b'(1) and c(10-14). The alpha and beta chains form an alternating ring which encloses part of the gamma chain. F(1) is attached to F(0) by a central stalk formed by the gamma and epsilon chains, while a peripheral stalk is formed by the delta, b and b' chains.

It is found in the plastid. It localises to the chloroplast thylakoid membrane. Functionally, f(1)F(0) ATP synthase produces ATP from ADP in the presence of a proton or sodium gradient. F-type ATPases consist of two structural domains, F(1) containing the extramembraneous catalytic core and F(0) containing the membrane proton channel, linked together by a central stalk and a peripheral stalk. During catalysis, ATP synthesis in the catalytic domain of F(1) is coupled via a rotary mechanism of the central stalk subunits to proton translocation. In terms of biological role, key component of the F(0) channel; it plays a direct role in translocation across the membrane. A homomeric c-ring of between 10-14 subunits forms the central stalk rotor element with the F(1) delta and epsilon subunits. In Staurastrum punctulatum (Green alga), this protein is ATP synthase subunit c, chloroplastic.